The primary structure comprises 216 residues: Ephrin-A1 (216 aa).

The first 28 residues, 1–28 (MMELYRAAVQLIVGVGLGVGLWLREAQG), serve as a signal peptide directing secretion. The Ephrin RBD domain occupies 29–161 (ERHIVFWNSS…RLRVHVSGRT (133 aa)). Asparagine 36 carries N-linked (GlcNAc...) asparagine glycosylation. Cysteine 61 and cysteine 102 form a disulfide bridge. The interval 162-181 (TPPPVNVHTPRSHIQSDEPE) is disordered. A lipid anchor (GPI-anchor amidated serine) is attached at serine 195. The propeptide at 196–216 (AAPGTPCTLYGLLLAALLLRL) is removed in mature form.

The protein belongs to the ephrin family. In terms of assembly, binds to the receptor tyrosine kinases EPHA2, EPHA4, EPHA5, EPHA6 and EPHA7. Also binds with low affinity to EPHA1.

The protein localises to the membrane. Its function is as follows. Cell surface GPI-bound ligand for Eph receptors, a family of receptor tyrosine kinases which are crucial for migration, repulsion and adhesion during neuronal, vascular and epithelial development. Binds promiscuously Eph receptors residing on adjacent cells, leading to contact-dependent bidirectional signaling into neighboring cells. This chain is Ephrin-A1 (efna1), found in Xenopus laevis (African clawed frog).